A 56-amino-acid polypeptide reads, in one-letter code: Prokaryotic ubiquitin-like protein UBact (56 aa).

Residues 1 to 56 (MPDQAQKTRPVGPGPSGGGEGPGSPKVEKPNTEELLKRMRKVDPDQAKRYRQRTGQ) are disordered. Basic and acidic residues predominate over residues 26-48 (KVEKPNTEELLKRMRKVDPDQAK). At Gln56 the chain carries Deamidated glutamine. Gln56 is covalently cross-linked (Isoglutamyl lysine isopeptide (Gln-Lys) (interchain with K-? in acceptor proteins)).

This sequence belongs to the ubiquitin-like protein UBact family. In terms of processing, may be modified by deamidation of its C-terminal glutamine to glutamate by the adjacently encoded deamidase. This could be a prerequisite to the subsequent conjugation, as shown in the other prokaryotic ubiquitin-like protein Pup.

May function as a protein modifier covalently attached to lysine residues of substrate proteins. This may serve to target the modified proteins for degradation by proteasomes. The sequence is that of Prokaryotic ubiquitin-like protein UBact from Pedosphaera parvula (strain Ellin514).